The chain runs to 348 residues: MTLNRDMVSPQEDRGEKAVEFSLRPARLADYVGQPQVQEQMEVFIPAARARHEALDHVLIFGPPGLGKTTLSHIIANELEVNLRQTSGPVLERPGDLAALLTNLEPRDVLFIDEIHRLSPVVEEVLYPAMEDRQIDIMIGEGPAARSIKLDLVPFTLVGATTRAGLLTSPLRDRFGIVQRLEFYAVDHLVLIVERTARILGMAMEKEGALEIARRSRGTPRIANRLLRRVRDYAEIKGDGQVTRQVAQKALDLLDVDSHGFDTMDRKLLLAMLEKFDGGPVGVDSLAAAIGEERGTIEDVIEPFLLQQGFVMRTPRGRMATRHAYLHFGLKPAVKMVPQEVSDLFPNE.

The large ATPase domain (RuvB-L) stretch occupies residues 1–184; the sequence is MTLNRDMVSP…FGIVQRLEFY (184 aa). ATP is bound by residues leucine 23, arginine 24, glycine 65, lysine 68, threonine 69, threonine 70, arginine 174, tyrosine 184, and arginine 221. Residue threonine 69 participates in Mg(2+) binding. The tract at residues 185-255 is small ATPAse domain (RuvB-S); that stretch reads AVDHLVLIVE…VAQKALDLLD (71 aa). Residues 258-348 form a head domain (RuvB-H) region; sequence SHGFDTMDRK…QEVSDLFPNE (91 aa). Residues arginine 294, arginine 313, and arginine 318 each coordinate DNA.

The protein belongs to the RuvB family. In terms of assembly, homohexamer. Forms an RuvA(8)-RuvB(12)-Holliday junction (HJ) complex. HJ DNA is sandwiched between 2 RuvA tetramers; dsDNA enters through RuvA and exits via RuvB. An RuvB hexamer assembles on each DNA strand where it exits the tetramer. Each RuvB hexamer is contacted by two RuvA subunits (via domain III) on 2 adjacent RuvB subunits; this complex drives branch migration. In the full resolvosome a probable DNA-RuvA(4)-RuvB(12)-RuvC(2) complex forms which resolves the HJ.

It localises to the cytoplasm. It catalyses the reaction ATP + H2O = ADP + phosphate + H(+). The RuvA-RuvB-RuvC complex processes Holliday junction (HJ) DNA during genetic recombination and DNA repair, while the RuvA-RuvB complex plays an important role in the rescue of blocked DNA replication forks via replication fork reversal (RFR). RuvA specifically binds to HJ cruciform DNA, conferring on it an open structure. The RuvB hexamer acts as an ATP-dependent pump, pulling dsDNA into and through the RuvAB complex. RuvB forms 2 homohexamers on either side of HJ DNA bound by 1 or 2 RuvA tetramers; 4 subunits per hexamer contact DNA at a time. Coordinated motions by a converter formed by DNA-disengaged RuvB subunits stimulates ATP hydrolysis and nucleotide exchange. Immobilization of the converter enables RuvB to convert the ATP-contained energy into a lever motion, pulling 2 nucleotides of DNA out of the RuvA tetramer per ATP hydrolyzed, thus driving DNA branch migration. The RuvB motors rotate together with the DNA substrate, which together with the progressing nucleotide cycle form the mechanistic basis for DNA recombination by continuous HJ branch migration. Branch migration allows RuvC to scan DNA until it finds its consensus sequence, where it cleaves and resolves cruciform DNA. This is Holliday junction branch migration complex subunit RuvB from Nitrosococcus oceani (strain ATCC 19707 / BCRC 17464 / JCM 30415 / NCIMB 11848 / C-107).